The following is a 580-amino-acid chain: RuBisCO large subunit-binding protein subunit alpha, chloroplastic (580 aa).

Residues 1-17 show a composition bias toward polar residues; the sequence is MAQSQLAKGSRQTTGRP. Residues 1–24 are disordered; that stretch reads MAQSQLAKGSRQTTGRPFQNKPAR.

It belongs to the chaperonin (HSP60) family. As to quaternary structure, oligomer of probably six alpha and six beta subunits.

Its subcellular location is the plastid. It localises to the chloroplast. This protein binds RuBisCO small and large subunits and is implicated in the assembly of the enzyme oligomer. This chain is RuBisCO large subunit-binding protein subunit alpha, chloroplastic, found in Chlamydomonas reinhardtii (Chlamydomonas smithii).